The chain runs to 365 residues: TD and POZ domain-containing protein 3 (365 aa).

One can recognise an MATH domain in the interval 19–149; it reads KFCYNWTISN…EDQFTICCKV (131 aa). Positions 188 to 250 constitute a BTB domain; it reads TDCCLLVAGH…EMMGFIYTGK (63 aa).

The protein belongs to the Tdpoz family.

The polypeptide is TD and POZ domain-containing protein 3 (Mus musculus (Mouse)).